The chain runs to 617 residues: DNA double-strand break repair protein Mre11 (617 aa).

Mn(2+) contacts are provided by Asp12, His14, Asp53, and Asn88. The active-site Proton donor is His89. 3 residues coordinate Mn(2+): His158, Asp189, and His191. The span at 395–432 shows a compositional bias: low complexity; it reads SPVDPSSSVSSIESSGSVSPIDSVSTVSPSSPSSSAII. Disordered stretches follow at residues 395–437 and 513–617; these read SPVD…EPEE and VEDE…GDYL. Residues 529–547 are compositionally biased toward polar residues; the sequence is APQSSSPVSFSDNSQTGFS. Residues 549–559 show a composition bias toward low complexity; the sequence is ISPPESIPSPE. Residues 560-583 are compositionally biased toward basic and acidic residues; sequence ILKENSEADADEKPVDGKLSEEKP.

Belongs to the MRE11/RAD32 family. Homodimer. Forms a heterotetramer composed of two Mre11 subunits and two Rad50 subunits. Mn(2+) is required as a cofactor.

Nuclease activity is regulated by Rad50. Functionally, part of the Rad50/Mre11 complex, which is involved in the early steps of DNA double-strand break (DSB) repair. The complex may facilitate opening of the processed DNA ends to aid in the recruitment of HerA and NurA. Mre11 binds to DSB ends and has both double-stranded 3'-5' exonuclease activity and single-stranded endonuclease activity. The chain is DNA double-strand break repair protein Mre11 from Methanosarcina mazei (strain ATCC BAA-159 / DSM 3647 / Goe1 / Go1 / JCM 11833 / OCM 88) (Methanosarcina frisia).